Consider the following 410-residue polypeptide: Lipoyl synthase, mitochondrial (410 aa).

The N-terminal 29 residues, 1–29 (MASTTVCSAARIRVASSQVLRSIANTRTY), are a transit peptide targeting the mitochondrion. Positions 29–39 (YATTSPESSIP) are enriched in polar residues. A disordered region spans residues 29–49 (YATTSPESSIPETKPTAKRTP). The [4Fe-4S] cluster site is built by cysteine 129, cysteine 134, cysteine 140, cysteine 160, cysteine 164, cysteine 167, and serine 375. Positions 143–364 (GGSKAAATAT…KEKAMEMGFL (222 aa)) constitute a Radical SAM core domain.

The protein belongs to the radical SAM superfamily. Lipoyl synthase family. Requires [4Fe-4S] cluster as cofactor.

Its subcellular location is the mitochondrion. The catalysed reaction is [[Fe-S] cluster scaffold protein carrying a second [4Fe-4S](2+) cluster] + N(6)-octanoyl-L-lysyl-[protein] + 2 oxidized [2Fe-2S]-[ferredoxin] + 2 S-adenosyl-L-methionine + 4 H(+) = [[Fe-S] cluster scaffold protein] + N(6)-[(R)-dihydrolipoyl]-L-lysyl-[protein] + 4 Fe(3+) + 2 hydrogen sulfide + 2 5'-deoxyadenosine + 2 L-methionine + 2 reduced [2Fe-2S]-[ferredoxin]. It functions in the pathway protein modification; protein lipoylation via endogenous pathway; protein N(6)-(lipoyl)lysine from octanoyl-[acyl-carrier-protein]: step 2/2. Functionally, catalyzes the radical-mediated insertion of two sulfur atoms into the C-6 and C-8 positions of the octanoyl moiety bound to the lipoyl domains of lipoate-dependent enzymes, thereby converting the octanoylated domains into lipoylated derivatives. The sequence is that of Lipoyl synthase, mitochondrial from Arthroderma otae (strain ATCC MYA-4605 / CBS 113480) (Microsporum canis).